The following is a 94-amino-acid chain: ESAT-6-like protein EsxL (94 aa).

It belongs to the WXG100 family. ESAT-6 subfamily. Strongly interacts with EsxK to form a heterodimeric complex under reducing conditions. The complex is regulated by the redox state of EsxL.

It is found in the secreted. In terms of biological role, induces apoptosis of host cells. Is immunogenic with highly specific seroreactivity towards TB patients' serum. The polypeptide is ESAT-6-like protein EsxL (Mycobacterium tuberculosis (strain ATCC 25618 / H37Rv)).